We begin with the raw amino-acid sequence, 611 residues long: POU domain, class 6, transcription factor 1 (611 aa).

The disordered stretch occupies residues 62–93; it reads ASQAAGEAGPDNLGSSAEATVKSPPGIPPSPA. The 75-residue stretch at 449-523 folds into the POU-specific domain; the sequence is EDGINLEEIR…VLEKWLNEAE (75 aa). Positions 544-603 form a DNA-binding region, homeobox; it reads KRKRRTSFTPQAIEALNAYFEKNPLPTGQEITEIAKELNYDREVVRVWFCNRRQTLKNTS.

It belongs to the POU transcription factor family. Class-6 subfamily. In the embryo, expressed exclusively in the developing brain, whereas in the adult its expression is restricted to brain, heart, skeletal muscle and lung. In the brain, the highest expression levels are found in specific cell layers of the cortex, the olfactory bulb, the hippocampus and the cerebellum.

It is found in the nucleus. In terms of biological role, transcription factor that binds preferentially to a variant of the octamer motif (5'-ATGATAAT-3'). The polypeptide is POU domain, class 6, transcription factor 1 (POU6F1) (Homo sapiens (Human)).